Reading from the N-terminus, the 203-residue chain is Protein-L-isoaspartate O-methyltransferase (203 aa).

S50 is an active-site residue.

It belongs to the methyltransferase superfamily. L-isoaspartyl/D-aspartyl protein methyltransferase family.

It is found in the cytoplasm. The enzyme catalyses [protein]-L-isoaspartate + S-adenosyl-L-methionine = [protein]-L-isoaspartate alpha-methyl ester + S-adenosyl-L-homocysteine. Catalyzes the methyl esterification of L-isoaspartyl residues in peptides and proteins that result from spontaneous decomposition of normal L-aspartyl and L-asparaginyl residues. It plays a role in the repair and/or degradation of damaged proteins. The chain is Protein-L-isoaspartate O-methyltransferase from Methanococcoides burtonii (strain DSM 6242 / NBRC 107633 / OCM 468 / ACE-M).